We begin with the raw amino-acid sequence, 627 residues long: RNA interference defective protein 10 (627 aa).

Disordered regions lie at residues Met1–Asn31, Gln467–Tyr487, and Ser523–Tyr589. Basic and acidic residues-rich tracts occupy residues Asn7 to Ile16, Gln467 to Gln478, and Arg526 to Asp537.

This sequence belongs to the maelstrom family. As to quaternary structure, interacts with rde-11 (via RING-type zinc finger domain). Interacts with ergo-1.

Functionally, in complex with rde-11, required in the endogenous and exogenous siRNA pathway for biogenesis and accumulation of secondary small interfering RNA (siRNA) intermediates, such as 22G-siRNAs derived from ergo-1 targets. In Caenorhabditis elegans, this protein is RNA interference defective protein 10.